The primary structure comprises 340 residues: Protein-arginine kinase (340 aa).

Residues 21-242 (VVLSSRIRLA…EQIIMQERVA (222 aa)) form the Phosphagen kinase C-terminal domain. ATP is bound by residues 24–28 (SSRIR), His79, Arg113, 164–168 (RASVM), and 195–200 (RGIYGE).

The protein belongs to the ATP:guanido phosphotransferase family.

The catalysed reaction is L-arginyl-[protein] + ATP = N(omega)-phospho-L-arginyl-[protein] + ADP + H(+). Catalyzes the specific phosphorylation of arginine residues in proteins. This chain is Protein-arginine kinase, found in Listeria innocua serovar 6a (strain ATCC BAA-680 / CLIP 11262).